The chain runs to 1171 residues: DNA-directed RNA polymerase subunit beta' (1171 aa).

Residues cysteine 60, cysteine 62, cysteine 75, and cysteine 78 each coordinate Zn(2+). The interval 299–319 (GRRGKPVTGPGNRPLKSLSDM) is disordered. 3 residues coordinate Mg(2+): aspartate 449, aspartate 451, and aspartate 453. 4 residues coordinate Zn(2+): cysteine 790, cysteine 864, cysteine 871, and cysteine 874.

Belongs to the RNA polymerase beta' chain family. The RNAP catalytic core consists of 2 alpha, 1 beta, 1 beta' and 1 omega subunit. When a sigma factor is associated with the core the holoenzyme is formed, which can initiate transcription. Mg(2+) serves as cofactor. It depends on Zn(2+) as a cofactor.

It carries out the reaction RNA(n) + a ribonucleoside 5'-triphosphate = RNA(n+1) + diphosphate. Its function is as follows. DNA-dependent RNA polymerase catalyzes the transcription of DNA into RNA using the four ribonucleoside triphosphates as substrates. The protein is DNA-directed RNA polymerase subunit beta' of Alkaliphilus metalliredigens (strain QYMF).